The sequence spans 220 residues: Ribose-5-phosphate isomerase A (220 aa).

Substrate contacts are provided by residues 28–31, 81–84, and 94–97; these read TGST, DGAD, and KGGG. E103 acts as the Proton acceptor in catalysis. Position 121 (K121) interacts with substrate.

It belongs to the ribose 5-phosphate isomerase family. Homodimer.

It catalyses the reaction aldehydo-D-ribose 5-phosphate = D-ribulose 5-phosphate. Its pathway is carbohydrate degradation; pentose phosphate pathway; D-ribose 5-phosphate from D-ribulose 5-phosphate (non-oxidative stage): step 1/1. In terms of biological role, catalyzes the reversible conversion of ribose-5-phosphate to ribulose 5-phosphate. The chain is Ribose-5-phosphate isomerase A from Shewanella baltica (strain OS185).